The primary structure comprises 290 residues: Fructose-1,6-bisphosphatase class 1 (290 aa).

4 residues coordinate Mg(2+): glutamate 78, aspartate 96, leucine 98, and aspartate 99. Residues 99 to 102 (DGSS), tyrosine 201, and lysine 226 each bind substrate. Glutamate 232 contributes to the Mg(2+) binding site.

This sequence belongs to the FBPase class 1 family. In terms of assembly, homotetramer. Mg(2+) is required as a cofactor.

It localises to the cytoplasm. It carries out the reaction beta-D-fructose 1,6-bisphosphate + H2O = beta-D-fructose 6-phosphate + phosphate. It participates in carbohydrate biosynthesis; gluconeogenesis. The polypeptide is Fructose-1,6-bisphosphatase class 1 (Helicobacter pylori (strain Shi470)).